A 59-amino-acid polypeptide reads, in one-letter code: Large ribosomal subunit protein uL30 (59 aa).

This sequence belongs to the universal ribosomal protein uL30 family. In terms of assembly, part of the 50S ribosomal subunit.

The chain is Large ribosomal subunit protein uL30 from Nocardia farcinica (strain IFM 10152).